The primary structure comprises 389 residues: Na(+)/H(+) antiporter NhaA 1 (389 aa).

The next 11 helical transmembrane spans lie at 12–32 (VLNE…ALLV), 62–82 (FLLW…GLEL), 97–117 (IVLP…LFAL), 128–148 (GWAI…MMCG), 157–177 (IFLL…IAIF), 184–204 (IVAF…NLLG), 220–240 (ISVL…AFFI), 260–280 (FWIA…VNLS), 282–302 (IDIG…LFVG), 331–351 (LYGV…IDGL), and 365–385 (LAIL…LKFF).

Belongs to the NhaA Na(+)/H(+) (TC 2.A.33) antiporter family.

The protein localises to the cell inner membrane. The catalysed reaction is Na(+)(in) + 2 H(+)(out) = Na(+)(out) + 2 H(+)(in). In terms of biological role, na(+)/H(+) antiporter that extrudes sodium in exchange for external protons. The sequence is that of Na(+)/H(+) antiporter NhaA 1 from Campylobacter jejuni (strain RM1221).